The primary structure comprises 648 residues: 5-aminolevulinate synthase, mitochondrial (648 aa).

The N-terminal 26 residues, 1–26 (MEALLQQSRAMCPFLKRSSPNTLRSL), are a transit peptide targeting the mitochondrion. The interval 69–109 (KRFTSSAAGVPGAGAGTPKPTRGSPGKRALHSTGGNGANMS) is disordered. Substrate-binding residues include arginine 170, serine 283, and lysine 302. 3 residues coordinate pyridoxal 5'-phosphate: serine 335, histidine 363, and threonine 409. Residue lysine 412 is part of the active site. An N6-(pyridoxal phosphate)lysine modification is found at lysine 412. Pyridoxal 5'-phosphate contacts are provided by threonine 441 and threonine 442. Residue threonine 527 coordinates substrate.

Belongs to the class-II pyridoxal-phosphate-dependent aminotransferase family. Homodimer. It depends on pyridoxal 5'-phosphate as a cofactor.

It localises to the mitochondrion matrix. The catalysed reaction is succinyl-CoA + glycine + H(+) = 5-aminolevulinate + CO2 + CoA. It participates in porphyrin-containing compound metabolism; protoporphyrin-IX biosynthesis; 5-aminolevulinate from glycine: step 1/1. Its function is as follows. Catalyzes the synthesis of 5-aminolevulinate (ALA) from succinyl-CoA and glycine, the first and rate-limiting step in heme biosynthesis. The polypeptide is 5-aminolevulinate synthase, mitochondrial (hemA) (Emericella nidulans (strain FGSC A4 / ATCC 38163 / CBS 112.46 / NRRL 194 / M139) (Aspergillus nidulans)).